The chain runs to 395 residues: Flap endonuclease 1 (395 aa).

Residues 1-104 form an N-domain region; that stretch reads MGIKQLFQII…GELAKRFQRK (104 aa). Position 34 (Asp34) interacts with Mg(2+). DNA contacts are provided by Arg47 and Arg70. Residues Asp86, Glu158, Glu160, Asp179, and Asp181 each coordinate Mg(2+). Positions 122 to 253 are I-domain; it reads DIEKFSRRTV…TTALKLIRDH (132 aa). Glu158 is a DNA binding site. DNA-binding residues include Gly231 and Asp233. Asp233 lines the Mg(2+) pocket. The interaction with PCNA stretch occupies residues 341–349; it reads QQARLEGFF. Residues 344-395 are disordered; that stretch reads RLEGFFKPVPKTDAQKAAHKRKLEEKNEEKKKKLKQEKKDKAAAKSKPRGAA. Positions 365–386 are enriched in basic and acidic residues; it reads KLEEKNEEKKKKLKQEKKDKAA.

It belongs to the XPG/RAD2 endonuclease family. FEN1 subfamily. Interacts with PCNA. Three molecules of FEN1 bind to one PCNA trimer with each molecule binding to one PCNA monomer. PCNA stimulates the nuclease activity without altering cleavage specificity. It depends on Mg(2+) as a cofactor. Post-translationally, phosphorylated. Phosphorylation upon DNA damage induces relocalization to the nuclear plasma.

It is found in the nucleus. The protein localises to the nucleolus. The protein resides in the nucleoplasm. It localises to the mitochondrion. Functionally, structure-specific nuclease with 5'-flap endonuclease and 5'-3' exonuclease activities involved in DNA replication and repair. During DNA replication, cleaves the 5'-overhanging flap structure that is generated by displacement synthesis when DNA polymerase encounters the 5'-end of a downstream Okazaki fragment. It enters the flap from the 5'-end and then tracks to cleave the flap base, leaving a nick for ligation. Also involved in the long patch base excision repair (LP-BER) pathway, by cleaving within the apurinic/apyrimidinic (AP) site-terminated flap. Acts as a genome stabilization factor that prevents flaps from equilibrating into structures that lead to duplications and deletions. Also possesses 5'-3' exonuclease activity on nicked or gapped double-stranded DNA, and exhibits RNase H activity. Also involved in replication and repair of rDNA and in repairing mitochondrial DNA. This Fusarium vanettenii (strain ATCC MYA-4622 / CBS 123669 / FGSC 9596 / NRRL 45880 / 77-13-4) (Fusarium solani subsp. pisi) protein is Flap endonuclease 1.